A 361-amino-acid chain; its full sequence is Putative F-box protein At3g18340 (361 aa).

The 46-residue stretch at 1–46 (MASGKLPWELEEEILCRLPPGSLVRLRSVCKHWNDLYNDKWFIKKS) folds into the F-box domain.

The protein is Putative F-box protein At3g18340 of Arabidopsis thaliana (Mouse-ear cress).